The following is a 1207-amino-acid chain: Plasma membrane calcium-transporting ATPase 4 (1207 aa).

At 1–100 (MTNPTEHTLP…KTFLELVWEA (100 aa)) the chain is on the cytoplasmic side. The residue at position 13 (serine 13) is a Phosphoserine. Residues 101 to 121 (LQDVTLIILEIAAIISLVLSF) form a helical membrane-spanning segment. Residues 122–147 (YRPPGGENEQCGLAVTSPEDEGEAEA) are Extracellular-facing. A helical membrane pass occupies residues 148-168 (GWIEGAAILFSVIIVVLVTAF). At 169-368 (NDWSKEKQFR…LAVQIGKAGL (200 aa)) the chain is on the cytoplasmic side. The segment at 294-317 (EEEKKKKGKKQGVPENRNKAKTQD) is disordered. A phosphoserine mark is found at serine 328 and serine 334. Residues 369 to 389 (IMSAITVLILILYFVIDNFVI) form a helical membrane-spanning segment. The Extracellular portion of the chain corresponds to 390–408 (QRRPWLAECTPIYVQYFVK). Residues 409-429 (FFIIGVTVLVVAVPEGLPLAV) traverse the membrane as a helical segment. Over 430-843 (TISLAYSVKK…RNVYDSISKF (414 aa)) the chain is Cytoplasmic. Aspartate 465 functions as the 4-aspartylphosphate intermediate in the catalytic mechanism. Mg(2+) contacts are provided by aspartate 785 and aspartate 789. The helical transmembrane segment at 844 to 864 (LQFQLTVNVVAVIVAFTGACI) threads the bilayer. The Extracellular portion of the chain corresponds to 865-871 (TQDSPLK). Residues 872–892 (AVQMLWVNLIMDTFASLALAT) form a helical membrane-spanning segment. At 893-918 (EPPTDSLLKRRPYGRNKPLISRTMMK) the chain is on the cytoplasmic side. A helical membrane pass occupies residues 919–939 (NILGHAVYQLTVIFFLVFAGE). The Extracellular segment spans residues 940 to 957 (KFFDIDSGRRAPLHSPPS). The chain crosses the membrane as a helical span at residues 958–977 (QHYTIIFNTFVLMQLFNEIN). Over 978 to 994 (SRKIHGERNVFSGIFRN) the chain is Cytoplasmic. The chain crosses the membrane as a helical span at residues 995-1015 (LIFCSVVLGTFISQIIIVEFG). The Extracellular portion of the chain corresponds to 1016–1028 (GKPFSCTKLTLSQ). A helical transmembrane segment spans residues 1029 to 1049 (WFWCLFIGIGELLWGQVISTI). Residues 1050–1207 (PTQSLKFLKE…SPLHSLETSV (158 aa)) are Cytoplasmic-facing. The interval 1086 to 1103 (LRRGQILWFRGLNRIQTQ) is calmodulin-binding subdomain A. Threonine 1102 is modified (phosphothreonine; by PKC). The calmodulin-binding subdomain B stretch occupies residues 1104-1113 (IKVVKAFHSS). The segment at 1159-1181 (VSKPGTKTSSLDGEVTPQTNKNN) is disordered. The segment covering 1163–1181 (GTKTSSLDGEVTPQTNKNN) has biased composition (polar residues).

It belongs to the cation transport ATPase (P-type) (TC 3.A.3) family. Type IIB subfamily. As to quaternary structure, interacts with PDZD11. Interacts with SLC35G1 and STIM1. Interacts with calmodulin. In terms of tissue distribution, isoform 1 is detected in brain, heart, liver, testis and epididymis. Isoform 2 is detected in brain (at protein level), heart, seminal vesicle and epididymis. There is a shift in expression from isoform 1 to isoform 2 along the length of the epididymis from caput to cauda (at protein level).

It localises to the cell membrane. The protein localises to the cell projection. It is found in the cilium. The protein resides in the flagellum membrane. The enzyme catalyses Ca(2+)(in) + ATP + H2O = Ca(2+)(out) + ADP + phosphate + H(+). Activated by calcium/calmodulin. Its function is as follows. Calcium/calmodulin-regulated and magnesium-dependent enzyme that catalyzes the hydrolysis of ATP coupled with the transport of calcium out of the cell. By regulating sperm cells calcium homeostasis, may play a role in sperm motility. This is Plasma membrane calcium-transporting ATPase 4 from Bos taurus (Bovine).